The primary structure comprises 1377 residues: DNA-directed RNA polymerase subunit beta' (1377 aa).

Positions 60, 62, 75, and 78 each coordinate Zn(2+). Mg(2+)-binding residues include D449, D451, and D453. Zn(2+) is bound by residues C777, C851, C858, and C861.

It belongs to the RNA polymerase beta' chain family. As to quaternary structure, the RNAP catalytic core consists of 2 alpha, 1 beta, 1 beta' and 1 omega subunit. When a sigma factor is associated with the core the holoenzyme is formed, which can initiate transcription. Requires Mg(2+) as cofactor. The cofactor is Zn(2+).

It carries out the reaction RNA(n) + a ribonucleoside 5'-triphosphate = RNA(n+1) + diphosphate. Its function is as follows. DNA-dependent RNA polymerase catalyzes the transcription of DNA into RNA using the four ribonucleoside triphosphates as substrates. This is DNA-directed RNA polymerase subunit beta' from Borrelia recurrentis (strain A1).